We begin with the raw amino-acid sequence, 460 residues long: tRNA modification GTPase MnmE (460 aa).

Arg-22, Glu-83, and Lys-122 together coordinate (6S)-5-formyl-5,6,7,8-tetrahydrofolate. The region spanning 219-381 is the TrmE-type G domain; it reads GIKTLIIGRP…LQQTILKKFQ (163 aa). Asn-229 contacts K(+). GTP contacts are provided by residues 229 to 234, 248 to 254, and 273 to 276; these read NVGKSS, SDISGTT, and DTAG. Ser-233 is a Mg(2+) binding site. Residues Ser-248, Ile-250, and Thr-253 each coordinate K(+). Thr-254 is a binding site for Mg(2+). Position 460 (Lys-460) interacts with (6S)-5-formyl-5,6,7,8-tetrahydrofolate.

Belongs to the TRAFAC class TrmE-Era-EngA-EngB-Septin-like GTPase superfamily. TrmE GTPase family. As to quaternary structure, homodimer. Heterotetramer of two MnmE and two MnmG subunits. It depends on K(+) as a cofactor.

Its subcellular location is the cytoplasm. Exhibits a very high intrinsic GTPase hydrolysis rate. Involved in the addition of a carboxymethylaminomethyl (cmnm) group at the wobble position (U34) of certain tRNAs, forming tRNA-cmnm(5)s(2)U34. The chain is tRNA modification GTPase MnmE from Aster yellows witches'-broom phytoplasma (strain AYWB).